Consider the following 404-residue polypeptide: Cysteine desulfurase IscS (404 aa).

Pyridoxal 5'-phosphate-binding positions include alanine 75–threonine 76, asparagine 155, glutamine 183, and serine 203–histidine 205. N6-(pyridoxal phosphate)lysine is present on lysine 206. Residue threonine 243 participates in pyridoxal 5'-phosphate binding. The Cysteine persulfide intermediate role is filled by cysteine 328. Cysteine 328 contributes to the [2Fe-2S] cluster binding site.

It belongs to the class-V pyridoxal-phosphate-dependent aminotransferase family. NifS/IscS subfamily. In terms of assembly, homodimer. Forms a heterotetramer with IscU, interacts with other sulfur acceptors. It depends on pyridoxal 5'-phosphate as a cofactor.

It localises to the cytoplasm. The enzyme catalyses (sulfur carrier)-H + L-cysteine = (sulfur carrier)-SH + L-alanine. Its pathway is cofactor biosynthesis; iron-sulfur cluster biosynthesis. Functionally, master enzyme that delivers sulfur to a number of partners involved in Fe-S cluster assembly, tRNA modification or cofactor biosynthesis. Catalyzes the removal of elemental sulfur atoms from cysteine to produce alanine. Functions as a sulfur delivery protein for Fe-S cluster synthesis onto IscU, an Fe-S scaffold assembly protein, as well as other S acceptor proteins. The sequence is that of Cysteine desulfurase IscS from Ruthia magnifica subsp. Calyptogena magnifica.